Reading from the N-terminus, the 682-residue chain is ATP-dependent DNA helicase RecG (682 aa).

Residues 46–139 (ELRDLEEVKH…LKNGPHQEDK (94 aa)) are wedge domain. A Helicase ATP-binding domain is found at 271–432 (DMSSPYRMNR…VFGEMDVSVI (162 aa)). An ATP-binding site is contributed by 284–291 (GDVGSGKT). The DEAH box motif lies at 385 to 388 (DEQH). Positions 451–611 (MLDRILAFVE…GFELSEKDLE (161 aa)) constitute a Helicase C-terminal domain.

This sequence belongs to the helicase family. RecG subfamily. Monomer. Interacts with SSB (sbbA), via the latter's 6 C-terminal residues. Colocalizes with DNA pol III subunit gamma/tau (dnaX).

The protein localises to the cytoplasm. It localises to the nucleoid. It catalyses the reaction Couples ATP hydrolysis with the unwinding of duplex DNA by translocating in the 3'-5' direction.. The enzyme catalyses ATP + H2O = ADP + phosphate + H(+). Replication fork regression on Holliday junctions (HJ) is inhibited by DisA; DisA inhibits the ATPase activity of RecG. Functionally, critical role in recombination and DNA repair. Helps process Holliday junction intermediates to mature products by catalyzing branch migration. Has a DNA unwinding activity characteristic of a DNA helicase with 3'-5' polarity. Unwinds branched duplex DNA (Y-DNA), Holliday junction (HJ) DNA and partially replicated forks as well as catalyzing fork reversal/regression. Does not seem to unwind R-loops. Inhibits the diadenylate cyclase (DAC) activity of DisA in the presence but not absence of HJ DNA, possibly by relocating DisA from the junction. This is ATP-dependent DNA helicase RecG from Bacillus subtilis (strain 168).